We begin with the raw amino-acid sequence, 346 residues long: Protein RecA (346 aa).

64–71 (GPESSGKT) is an ATP binding site.

This sequence belongs to the RecA family.

It is found in the cytoplasm. Its function is as follows. Can catalyze the hydrolysis of ATP in the presence of single-stranded DNA, the ATP-dependent uptake of single-stranded DNA by duplex DNA, and the ATP-dependent hybridization of homologous single-stranded DNAs. It interacts with LexA causing its activation and leading to its autocatalytic cleavage. This chain is Protein RecA, found in Bacillus pumilus (strain SAFR-032).